Here is a 211-residue protein sequence, read N- to C-terminus: Urease accessory protein UreE (211 aa).

The disordered stretch occupies residues 134–211 (FDPEGGAYAP…DHHGHGHEHK (78 aa)). Over residues 147–202 (PSHDHAGHDHAHDSHAHHDHDHGKHAQHDHGKHDHAHHDHAAHDDHHVHDEHCGHD) the composition is skewed to basic and acidic residues.

This sequence belongs to the UreE family.

The protein localises to the cytoplasm. Its function is as follows. Involved in urease metallocenter assembly. Binds nickel. Probably functions as a nickel donor during metallocenter assembly. This is Urease accessory protein UreE from Rhodopseudomonas palustris (strain BisB18).